The chain runs to 211 residues: Uridine kinase (211 aa).

Residue 13-20 (GGTASGKT) participates in ATP binding.

Belongs to the uridine kinase family.

The protein resides in the cytoplasm. The enzyme catalyses uridine + ATP = UMP + ADP + H(+). It catalyses the reaction cytidine + ATP = CMP + ADP + H(+). It participates in pyrimidine metabolism; CTP biosynthesis via salvage pathway; CTP from cytidine: step 1/3. It functions in the pathway pyrimidine metabolism; UMP biosynthesis via salvage pathway; UMP from uridine: step 1/1. The polypeptide is Uridine kinase (Thermus thermophilus (strain ATCC BAA-163 / DSM 7039 / HB27)).